Reading from the N-terminus, the 120-residue chain is UPF0295 protein Exig_0660 (120 aa).

2 helical membrane passes run 16-36 (AMFL…LKQF) and 41-61 (VILM…YFLI).

The protein belongs to the UPF0295 family.

It localises to the cell membrane. This is UPF0295 protein Exig_0660 from Exiguobacterium sibiricum (strain DSM 17290 / CCUG 55495 / CIP 109462 / JCM 13490 / 255-15).